The primary structure comprises 134 residues: Psoriasis susceptibility 1 candidate gene 2 protein homolog (134 aa).

The N-terminal stretch at 1-21 is a signal peptide; sequence MLTWKLLGLLVLCLCAGGISG. Residues 18 to 134 are disordered; it reads GISGNGDPSP…DLDPPQEEYR (117 aa). 2 stretches are compositionally biased toward pro residues: residues 39 to 67 and 81 to 98; these read PPLPLGPPIPGDPWPGAPPLFDEPPPPGS and PPKPPSTDPPKPPLPDDP. The segment covering 122-134 has biased composition (acidic residues); it reads EEPDLDPPQEEYR.

The protein localises to the secreted. The sequence is that of Psoriasis susceptibility 1 candidate gene 2 protein homolog (Psors1c2) from Mus musculus (Mouse).